The primary structure comprises 252 residues: Small ribosomal subunit protein uS2 (252 aa).

Belongs to the universal ribosomal protein uS2 family. Component of the small ribosomal subunit. Mature ribosomes consist of a small (40S) and a large (60S) subunit. The 40S subunit contains about 33 different proteins and 1 molecule of RNA (18S). The 60S subunit contains about 49 different proteins and 3 molecules of RNA (25S, 5.8S and 5S). Interacts with RPS21.

The protein resides in the cytoplasm. Functionally, required for the assembly and/or stability of the 40S ribosomal subunit. Required for the processing of the 20S rRNA-precursor to mature 18S rRNA in a late step of the maturation of 40S ribosomal subunits. This Encephalitozoon cuniculi (strain GB-M1) (Microsporidian parasite) protein is Small ribosomal subunit protein uS2.